The primary structure comprises 235 residues: Cytidylate kinase (235 aa).

Residue 16–24 (GPAASGKST) participates in ATP binding.

The protein belongs to the cytidylate kinase family. Type 1 subfamily.

It localises to the cytoplasm. The catalysed reaction is CMP + ATP = CDP + ADP. The enzyme catalyses dCMP + ATP = dCDP + ADP. This chain is Cytidylate kinase, found in Chloroherpeton thalassium (strain ATCC 35110 / GB-78).